The following is a 626-amino-acid chain: Chaperone protein DnaK (626 aa).

Position 197 is a phosphothreonine; by autocatalysis (Thr-197). The span at 598–612 shows a compositional bias: low complexity; it reads AQGEQGQAAQPQAET. The segment at 598 to 626 is disordered; that stretch reads AQGEQGQAAQPQAETQGDDVQDVEFEEVK. The span at 613–626 shows a compositional bias: acidic residues; that stretch reads QGDDVQDVEFEEVK.

It belongs to the heat shock protein 70 family.

Its function is as follows. Acts as a chaperone. The polypeptide is Chaperone protein DnaK (Flavobacterium psychrophilum (strain ATCC 49511 / DSM 21280 / CIP 103535 / JIP02/86)).